Reading from the N-terminus, the 78-residue chain is Teretoxin Tsu6.15 (78 aa).

A signal peptide spans 1 to 21; that stretch reads MATSGRLLCFCLVLGLVFESL. A propeptide spanning residues 22–47 is cleaved from the precursor; it reads GYSEARPPRDRKRTVTAKRYDPLAQR.

The protein belongs to the teretoxin M (TM) superfamily. In terms of processing, contains 3 disulfide bonds. Expressed by the venom duct.

It localises to the secreted. The sequence is that of Teretoxin Tsu6.15 from Terebra subulata (Chocolate spotted auger).